The chain runs to 101 residues: UPF0358 protein EF_2458 (101 aa).

The protein belongs to the UPF0358 family.

The polypeptide is UPF0358 protein EF_2458 (Enterococcus faecalis (strain ATCC 700802 / V583)).